The following is a 491-amino-acid chain: Chromosomal replication initiator protein DnaA (491 aa).

Residues 1–86 (MTDELNSQFT…VEALSRRLGE (86 aa)) are domain I, interacts with DnaA modulators. The interval 86–150 (ENVELGVRIA…GADKAETPDT (65 aa)) is domain II. A domain III, AAA+ region region spans residues 151 to 367 (SLNARYTFES…GALIRVTAFA (217 aa)). ATP is bound by residues G195, G197, K198, and T199. Positions 368-491 (SLNKSPIELS…TARIRQRSRH (124 aa)) are domain IV, binds dsDNA.

Belongs to the DnaA family. In terms of assembly, oligomerizes as a right-handed, spiral filament on DNA at oriC.

It is found in the cytoplasm. Functionally, plays an essential role in the initiation and regulation of chromosomal replication. ATP-DnaA binds to the origin of replication (oriC) to initiate formation of the DNA replication initiation complex once per cell cycle. Binds the DnaA box (a 9 base pair repeat at the origin) and separates the double-stranded (ds)DNA. Forms a right-handed helical filament on oriC DNA; dsDNA binds to the exterior of the filament while single-stranded (ss)DNA is stabiized in the filament's interior. The ATP-DnaA-oriC complex binds and stabilizes one strand of the AT-rich DNA unwinding element (DUE), permitting loading of DNA polymerase. After initiation quickly degrades to an ADP-DnaA complex that is not apt for DNA replication. Binds acidic phospholipids. The protein is Chromosomal replication initiator protein DnaA of Mycobacteroides abscessus (strain ATCC 19977 / DSM 44196 / CCUG 20993 / CIP 104536 / JCM 13569 / NCTC 13031 / TMC 1543 / L948) (Mycobacterium abscessus).